Here is a 247-residue protein sequence, read N- to C-terminus: 2-dehydro-3-deoxy-phosphogluconate aldolase (247 aa).

Belongs to the DagF family.

The enzyme catalyses 2-dehydro-3-deoxy-6-phospho-D-gluconate = D-glyceraldehyde 3-phosphate + pyruvate. Functionally, involved in the catabolism of D-glucosaminate. Catalyzes the conversion of keto-3-deoxygluconate 6-phosphate (KDGP) to yield pyruvate and glyceraldehyde-3-phosphate. The protein is 2-dehydro-3-deoxy-phosphogluconate aldolase of Salmonella typhimurium (strain 14028s / SGSC 2262).